The chain runs to 248 residues: Peptidyl-prolyl cis-trans isomerase, chloroplastic (248 aa).

The PPIase cyclophilin-type domain occupies 85–243 (FFDIEIGGES…KPCKIAKSGE (159 aa)). The segment at 223-248 (QETSKLDNSPKKPCKIAKSGELPLDG) is disordered.

Belongs to the cyclophilin-type PPIase family. In terms of tissue distribution, highly expressed in leaf.

It localises to the plastid. The protein localises to the chloroplast stroma. It carries out the reaction [protein]-peptidylproline (omega=180) = [protein]-peptidylproline (omega=0). Binds cyclosporin A (CsA). CsA mediates some of its effects via an inhibitory action on PPIase. Its function is as follows. PPIases accelerate the folding of proteins. It catalyzes the cis-trans isomerization of proline imidic peptide bonds in oligopeptides. The protein is Peptidyl-prolyl cis-trans isomerase, chloroplastic of Vicia faba (Broad bean).